The following is a 416-amino-acid chain: Solute carrier family 35 member D3 (416 aa).

10 helical membrane passes run 9 to 29 (VLGI…NILL), 38 to 58 (FSFL…SLEL), 64 to 84 (LIAV…VAVL), 103 to 123 (MYVV…VLVL), 131 to 151 (GVLA…AGDL), 155 to 175 (PIGY…LVLI), 187 to 207 (LTAQ…CSFA), 224 to 244 (AMVC…FTTL), 257 to 277 (FVGV…FSDV), and 280 to 300 (TSLF…YCVA). The disordered stretch occupies residues 334 to 384 (MEELPGEGGNGRSEGGEAAGGPAQESRQEVRGSPRGVPLVAGSSEEGSRRS). Positions 339 to 352 (GEGGNGRSEGGEAA) are enriched in gly residues.

The protein belongs to the TPT transporter family. SLC35D subfamily. Could interact with ATG14, BECN1 and PIK3C3 that form the PI3KC3-C1/AIC/autophagy initiation complex; enhancing the formation of the AIC and promoting autophagy.

The protein resides in the cytoplasmic vesicle. It localises to the secretory vesicle. It is found in the synaptic vesicle membrane. Its subcellular location is the early endosome membrane. The protein localises to the endoplasmic reticulum membrane. The enzyme catalyses UDP-alpha-D-glucose(in) = UDP-alpha-D-glucose(out). Inhibited by proton uncouplers that directly abolish the proton electrochemical gradient. In terms of biological role, probable UDP-glucose transmembrane transporter involved in UDP-glucose transport from the cytosol to the lumen of synaptic vesicles. It is involved in platelet dense granules maturation. Functionally, alternatively, could function as a molecular adapter enhancing the formation of the PI3KC3-C1/AIC/autophagy initiation complex to promote autophagy in dopaminergic neurons. Could also regulate the plasma membrane localization of the D(1A) dopamine receptor/DRD1 and dopamine signaling. The sequence is that of Solute carrier family 35 member D3 from Homo sapiens (Human).